We begin with the raw amino-acid sequence, 397 residues long: Protein RecA (397 aa).

Positions 1-23 are disordered; the sequence is MALETKPAKDPAAEDKHELDPKR. 83-90 is a binding site for ATP; the sequence is GPESSGKT.

The protein belongs to the RecA family.

The protein resides in the cytoplasm. In terms of biological role, can catalyze the hydrolysis of ATP in the presence of single-stranded DNA, the ATP-dependent uptake of single-stranded DNA by duplex DNA, and the ATP-dependent hybridization of homologous single-stranded DNAs. It interacts with LexA causing its activation and leading to its autocatalytic cleavage. This Bifidobacterium longum (strain NCC 2705) protein is Protein RecA.